The primary structure comprises 640 residues: Autophagy-related protein 20 (640 aa).

Polar residues-rich tracts occupy residues 1-18 and 126-153; these read MSDL…SETR and AETC…PSVS. Disordered regions lie at residues 1–63 and 126–156; these read MSDL…NNKV and AETC…SNRK. At S2 the chain carries N-acetylserine. One can recognise a PX domain in the interval 140 to 301; it reads MNGETSASEE…DFLDPNNHNW (162 aa). Residues R192, S194, K218, and R267 each contribute to the a 1,2-diacyl-sn-glycero-3-phospho-(1D-myo-inositol-3-phosphate) site. Residues S361 and S363 each carry the phosphoserine modification. 2 coiled-coil regions span residues 475 to 512 and 562 to 593; these read LQNE…DNEM and TASI…KVIK.

This sequence belongs to the sorting nexin family. In terms of assembly, forms a complex with SNX4 and ATG17.

The protein resides in the endosome membrane. The protein localises to the preautophagosomal structure membrane. Its function is as follows. Required for cytoplasm to vacuole transport (Cvt), pexophagy and mitophagy. Also involved in endoplasmic reticulum-specific autophagic process and is essential for the survival of cells subjected to severe ER stress. Functions in protein retrieval from the endocytic pathway. Required for proper sorting of the v-SNARE protein SNC1. The sequence is that of Autophagy-related protein 20 (ATG20) from Saccharomyces cerevisiae (strain ATCC 204508 / S288c) (Baker's yeast).